We begin with the raw amino-acid sequence, 119 residues long: uncharacterized protein (119 aa).

This sequence to T.pallidum TP_0127, TP_0315 and TP_0619.

This is an uncharacterized protein from Treponema pallidum (strain Nichols).